Reading from the N-terminus, the 291-residue chain is MTTLAIDIGGTKLAAALIDKNLRISQRRELPTPASKTPDALREALKALVEPLRAEARQVAIASTGIIQEGMLLALNPHNLGGLLHFPLVQTLETIAGLPTLAVNDAQAAAWAEYHALPDDIRDMVFITVSTGVGGGVVCDGKLLTGKGGLAGHLGHTLADPHGPVCGCGRVGCVEAIASGRGMAAAARDDLAGCDAKTLFIRAGEGHQQARHLVSQSAQVIARMIADVKATTDCQCVVIGGSVGLAEGYLEQVRAFLMQEPVPYHVALSAARYRHDAGLLGAALLAQGDTL.

Residues 5 to 12 (AIDIGGTK) and 132 to 139 (GVGGGVVC) contribute to the ATP site. 4 residues coordinate Zn(2+): His156, Cys166, Cys168, and Cys173.

Belongs to the ROK (NagC/XylR) family. NanK subfamily. Homodimer.

It carries out the reaction an N-acyl-D-mannosamine + ATP = an N-acyl-D-mannosamine 6-phosphate + ADP + H(+). It functions in the pathway amino-sugar metabolism; N-acetylneuraminate degradation; D-fructose 6-phosphate from N-acetylneuraminate: step 2/5. In terms of biological role, catalyzes the phosphorylation of N-acetylmannosamine (ManNAc) to ManNAc-6-P. This Salmonella heidelberg (strain SL476) protein is N-acetylmannosamine kinase.